A 245-amino-acid polypeptide reads, in one-letter code: Ribonuclease 3 (245 aa).

The region spanning 24-146 (YAVFLQKLGY…IIGAIYLESG (123 aa)) is the RNase III domain. Mg(2+) is bound at residue Glu-59. The active site involves Asp-63. Asn-132 and Glu-135 together coordinate Mg(2+). Glu-135 is an active-site residue. Residues 173 to 243 (DSKTLLQEYL…ARQAYELAIV (71 aa)) enclose the DRBM domain.

It belongs to the ribonuclease III family. In terms of assembly, homodimer. The cofactor is Mg(2+).

It is found in the cytoplasm. The catalysed reaction is Endonucleolytic cleavage to 5'-phosphomonoester.. In terms of biological role, digests double-stranded RNA. Involved in the processing of primary rRNA transcript to yield the immediate precursors to the large and small rRNAs (23S and 16S). Processes some mRNAs, and tRNAs when they are encoded in the rRNA operon. Processes pre-crRNA and tracrRNA of type II CRISPR loci if present in the organism. The chain is Ribonuclease 3 from Nitrosomonas europaea (strain ATCC 19718 / CIP 103999 / KCTC 2705 / NBRC 14298).